A 79-amino-acid chain; its full sequence is MSYKNIYYSDKYTDEHFEYRHVMLPKELAKQVPKTHLMSEEEWRRLGVQQSLGWVHYMIHEPEPHILLFRRPLPKDQQK.

The protein belongs to the CKS family. In terms of assembly, forms a homohexamer that can probably bind six kinase subunits.

Functionally, binds to the catalytic subunit of the cyclin dependent kinases and is essential for their biological function. This chain is Cyclin-dependent kinases regulatory subunit 2 (cks2), found in Xenopus laevis (African clawed frog).